Consider the following 527-residue polypeptide: Peptide chain release factor 3 (527 aa).

Residues 9–278 form the tr-type G domain; sequence NKRRTFAIIS…GLTQWAPKPQ (270 aa). GTP-binding positions include 18–25, 86–90, and 140–143; these read SHPDAGKT, DTPGH, and NKLD.

The protein belongs to the TRAFAC class translation factor GTPase superfamily. Classic translation factor GTPase family. PrfC subfamily.

It is found in the cytoplasm. Functionally, increases the formation of ribosomal termination complexes and stimulates activities of RF-1 and RF-2. It binds guanine nucleotides and has strong preference for UGA stop codons. It may interact directly with the ribosome. The stimulation of RF-1 and RF-2 is significantly reduced by GTP and GDP, but not by GMP. The polypeptide is Peptide chain release factor 3 (Haemophilus influenzae (strain PittEE)).